A 161-amino-acid polypeptide reads, in one-letter code: MTGSDQTRAKLIDIELDESIGRSTPDVEHERAVAIFDLIEENSFQPVNDSGAGPYRLKLSLAEQRLVFAVAREDGTAVVTHILSLTPLRRIVKDYYMICESYYDAIRSSTPSHIEAIDMGRRGLHNEGSQTLMDRLSGKIDIDFDTARRLFTLVCVLHWRG.

This sequence belongs to the UPF0262 family.

This Mesorhizobium japonicum (strain LMG 29417 / CECT 9101 / MAFF 303099) (Mesorhizobium loti (strain MAFF 303099)) protein is UPF0262 protein mll6455.